A 957-amino-acid polypeptide reads, in one-letter code: Receptor-like protein 53 (957 aa).

An N-terminal signal peptide occupies residues 1–30 (MEGFWNSKSIIRITLSFIFLFICHFLDVLA). Residues 31–910 (APTRNLCRPE…EEEDEDLISW (880 aa)) are Extracellular-facing. Asn-78, Asn-114, Asn-143, Asn-167, and Asn-191 each carry an N-linked (GlcNAc...) asparagine glycan. LRR repeat units lie at residues 120 to 143 (LHFL…SIEN), 144 to 170 (LSHL…NLSR), 172 to 192 (TYLN…ICNL), 193 to 216 (SHLT…IGGL), 217 to 240 (SHLT…IGNL), 241 to 266 (SNLT…NLSQ), 268 to 287 (TFLG…SFGN), 288 to 312 (LNQL…LLNL), 313 to 336 (TGLS…ITSL), 338 to 360 (NLMD…LFTI), 361 to 384 (PSLT…NISS), and 386 to 409 (SNLY…ISKL). N-linked (GlcNAc...) asparagine glycans are attached at residues Asn-239, Asn-242, Asn-252, and Asn-263. Asn-311 and Asn-332 each carry an N-linked (GlcNAc...) asparagine glycan. The N-linked (GlcNAc...) asparagine glycan is linked to Asn-381. One copy of the LRR 13; degenerate repeat lies at 412-433 (LFRLDISHLNTQGPVDFSIFSH). 16 LRR repeats span residues 434 to 458 (LKSL…YFLS), 460 to 483 (FKRL…SVSD), 486 to 509 (SQLI…VRTQ), 510 to 533 (HELG…LWRL), 535 to 556 (ILYY…SKPE), 558 to 580 (SLLY…ICGL), 581 to 604 (RSLN…MGHL), 605 to 629 (KSTL…IFEI), 631 to 651 (RSLD…LSFF), 652 to 674 (STLE…WLSS), 675 to 697 (LPKL…EATF), 698 to 721 (PELR…YFVK), 765 to 789 (LTIY…IGLL), 790 to 813 (KELL…MGNL), 814 to 837 (TALE…LGDL), and 839 to 862 (FLAY…QFLT). Residues Asn-441, Asn-446, and Asn-477 are each glycosylated (N-linked (GlcNAc...) asparagine). Asn-540 and Asn-543 each carry an N-linked (GlcNAc...) asparagine glycan. N-linked (GlcNAc...) asparagine glycosylation occurs at Asn-594. A glycan (N-linked (GlcNAc...) asparagine) is linked at Asn-665. Residue Asn-711 is glycosylated (N-linked (GlcNAc...) asparagine). Asn-812 carries N-linked (GlcNAc...) asparagine glycosylation. N-linked (GlcNAc...) asparagine glycans are attached at residues Asn-844 and Asn-864. A helical transmembrane segment spans residues 911-931 (IAAAIGFGPGIAFGLMFGYIL). Topologically, residues 932–957 (VSYKPEWFMNPFDRNNRRQKRHKTTH) are cytoplasmic.

The protein belongs to the RLP family.

Its subcellular location is the cell membrane. The polypeptide is Receptor-like protein 53 (Arabidopsis thaliana (Mouse-ear cress)).